The chain runs to 454 residues: Kynurenine 3-monooxygenase (454 aa).

It belongs to the aromatic-ring hydroxylase family. KMO subfamily. FAD serves as cofactor.

It carries out the reaction L-kynurenine + NADPH + O2 + H(+) = 3-hydroxy-L-kynurenine + NADP(+) + H2O. It participates in cofactor biosynthesis; NAD(+) biosynthesis; quinolinate from L-kynurenine: step 1/3. Functionally, catalyzes the hydroxylation of L-kynurenine (L-Kyn) to form 3-hydroxy-L-kynurenine (L-3OHKyn). Required for synthesis of quinolinic acid. This chain is Kynurenine 3-monooxygenase, found in Salinispora arenicola (strain CNS-205).